Here is a 384-residue protein sequence, read N- to C-terminus: uncharacterized protein (384 aa).

A compositionally biased stretch (basic residues) spans 327–339; sequence KKEKKEKKEKKPK. Positions 327-358 are disordered; that stretch reads KKEKKEKKEKKPKKAVEEEPKQYLTPEFVNDD.

This is an uncharacterized protein from Magallana gigas (Pacific oyster).